The following is a 284-amino-acid chain: 4-diphosphocytidyl-2-C-methyl-D-erythritol kinase (284 aa).

The active site involves Lys14. Pro98 to Ser108 contributes to the ATP binding site. Residue Asp140 is part of the active site.

Belongs to the GHMP kinase family. IspE subfamily.

It catalyses the reaction 4-CDP-2-C-methyl-D-erythritol + ATP = 4-CDP-2-C-methyl-D-erythritol 2-phosphate + ADP + H(+). It participates in isoprenoid biosynthesis; isopentenyl diphosphate biosynthesis via DXP pathway; isopentenyl diphosphate from 1-deoxy-D-xylulose 5-phosphate: step 3/6. Functionally, catalyzes the phosphorylation of the position 2 hydroxy group of 4-diphosphocytidyl-2C-methyl-D-erythritol. In Shewanella denitrificans (strain OS217 / ATCC BAA-1090 / DSM 15013), this protein is 4-diphosphocytidyl-2-C-methyl-D-erythritol kinase.